Consider the following 446-residue polypeptide: Maltoporin (446 aa).

Residues Met-1–Ala-25 form the signal peptide.

It belongs to the porin LamB (TC 1.B.3) family. Homotrimer formed of three 18-stranded antiparallel beta-barrels, containing three independent channels.

Its subcellular location is the cell outer membrane. The enzyme catalyses beta-maltose(in) = beta-maltose(out). Involved in the transport of maltose and maltodextrins. The protein is Maltoporin of Escherichia coli O6:K15:H31 (strain 536 / UPEC).